Here is a 141-residue protein sequence, read N- to C-terminus: VLNAGDKANVKAVWNKVAAHVEEYGAETLERMFTVYPQTKTYFPHFDLHHGSAQIRTHGKKVLTALGEAVNHIDDLASALSKLSDIHAQTLRVDPVNFKFLNHCFLVVVAIHQPSVLTPEVHVSLDKFLSAVGTVLTSKYR.

Residues 1–141 (VLNAGDKANV…VGTVLTSKYR (141 aa)) enclose the Globin domain. H58 serves as a coordination point for O2. H87 serves as a coordination point for heme b.

This sequence belongs to the globin family. Heterotetramer of two alpha chains and two beta chains. As to expression, red blood cells.

Involved in oxygen transport from the lung to the various peripheral tissues. The sequence is that of Hemoglobin subunit alpha-A (HBAA) from Chrysemys picta bellii (Western painted turtle).